Reading from the N-terminus, the 478-residue chain is MNSAVEQQLAELGIEAYLKEHQYKSLLRFLTCGSVDDGKSTLIGRLLHDSKQIYADQLDAVHADSQRVGTTGERPDLALLVDGLQAEREQGITIDVAYRYFSTQKRKFIIADTPGHEQYTRNMATGASTCNVAVILIDARKGVLDQTRRHSYIANLLGIRHFVVAVNKMDLVEYSQSRFEEIKEEYLAFSKKLNNPNLDISILPLSALEGDNVVNPSDALSWYQGEPLLEVLENVDIDADKGNGEFRFPVQYVNRPNLDFRGFAGTVSSGGISVGDEIVALPSGKKSKVARIVTFDGDLTSAQAGQAVTLTLEDEIDISRGDLLVKSQSNLQATDQFKAEIVWMTEKGLEPGRQYDIKIAGKKTVGQIDAIHHQVNINSLEKFDTQELPLNGIGLCDVSLTETVSLDRYQDCADTGGFIFIDRLTNVTVGAGMIQNLSDLSESKPINDNISAFEIELNALIRKHFPHWETKDISKLLG.

One can recognise a tr-type G domain in the interval 24–240 (KSLLRFLTCG…VLENVDIDAD (217 aa)). Positions 33–40 (GSVDDGKS) are G1. Residue 33–40 (GSVDDGKS) coordinates GTP. Positions 91 to 95 (GITID) are G2. The interval 112–115 (DTPG) is G3. GTP contacts are provided by residues 112–116 (DTPGH) and 167–170 (NKMD). The G4 stretch occupies residues 167 to 170 (NKMD). Positions 206 to 208 (SAL) are G5.

Belongs to the TRAFAC class translation factor GTPase superfamily. Classic translation factor GTPase family. CysN/NodQ subfamily. In terms of assembly, heterodimer composed of CysD, the smaller subunit, and CysN.

The catalysed reaction is sulfate + ATP + H(+) = adenosine 5'-phosphosulfate + diphosphate. Its pathway is sulfur metabolism; hydrogen sulfide biosynthesis; sulfite from sulfate: step 1/3. In terms of biological role, with CysD forms the ATP sulfurylase (ATPS) that catalyzes the adenylation of sulfate producing adenosine 5'-phosphosulfate (APS) and diphosphate, the first enzymatic step in sulfur assimilation pathway. APS synthesis involves the formation of a high-energy phosphoric-sulfuric acid anhydride bond driven by GTP hydrolysis by CysN coupled to ATP hydrolysis by CysD. This Aliivibrio fischeri (strain ATCC 700601 / ES114) (Vibrio fischeri) protein is Sulfate adenylyltransferase subunit 1.